The primary structure comprises 371 residues: MTRPIEVRKVPIEHVSDAAGLADLIDAGVFSADDVIAVVGKTEGNGGVNDYTRIISTHAYRAVLEEKGTRSKEEVAQVPLVWSGGTDGVISPHATIFAYAPEGRYLPTDEPRVTVGYAMSEVLLPEDIGRPAMVEKVAAGVRVAMERAGITDPADVHYVQTKTPLLVQDTINDAERRGETVYTHNTLESMDVSNATTALGIAVALGEIEMPTAEQIFHDLSLYSSVASCSSGVELDQAQIVVVGNARGVGGRFRVGHSIMKDALDMDGVWAAIRDAGLDDMPVDCIHPRHIKGRLVNLFLKCEADPTGRVRGRRNIMLDDSDVAWHRQIKACVGGVVAAVSGDPMNFVSVAAVHQGPSGGGPVIAIVDLEA.

The RU A stretch occupies residues M1–R104. Residues R53 and S83–G84 each bind substrate. The interval R112–R247 is RU B. Residue K162 is part of the active site. Residues N194 and S230–S231 each bind substrate. S230 functions as the Nucleophile in the catalytic mechanism. The tract at residues F253–A371 is RU C. E303 is a Mg(2+) binding site. Substrate-binding positions include K330 and S349–V350. Residues A352, Q355, G356, P357, and G360 each contribute to the Mg(2+) site.

It belongs to the cyclic amide hydrolase (CyAH) family. In terms of assembly, homotetramer.

It carries out the reaction barbiturate + H2O = 3-oxo-3-ureidopropanoate. It functions in the pathway pyrimidine metabolism; uracil degradation via oxidative pathway; malonate and urea from uracil: step 2/3. Functionally, responsible for the hydrolysis of barbituric acid (2,4,6-trihydroxy-1,3-pyrimidine), an intermediate in the oxidative catabolism of pyrimidines. Catalyzes the hydrolytic opening of the pyrimidine ring of barbituric acid to yield ureidomalonic acid. Can also use cyanuric acid as a substrate, albeit with lower efficiency. The sequence is that of Barbiturase 2 from Nocardioides sp. (strain ATCC BAA-499 / JS614).